A 338-amino-acid polypeptide reads, in one-letter code: GTP 3',8-cyclase (338 aa).

The Radical SAM core domain occupies 8–227 (KLQRPLKDLR…DMIHQVMPLE (220 aa)). Arg-17 contacts GTP. Cys-24 and Cys-28 together coordinate [4Fe-4S] cluster. Tyr-30 contacts S-adenosyl-L-methionine. Cys-31 is a binding site for [4Fe-4S] cluster. GTP is bound at residue Arg-71. Gly-75 contacts S-adenosyl-L-methionine. Residue Thr-102 participates in GTP binding. An S-adenosyl-L-methionine-binding site is contributed by Ser-126. Position 163 (Lys-163) interacts with GTP. Residue Met-197 participates in S-adenosyl-L-methionine binding. The [4Fe-4S] cluster site is built by Cys-261 and Cys-264. 266–268 (RAR) contributes to the GTP binding site. Cys-278 serves as a coordination point for [4Fe-4S] cluster.

It belongs to the radical SAM superfamily. MoaA family. As to quaternary structure, monomer and homodimer. [4Fe-4S] cluster serves as cofactor.

It catalyses the reaction GTP + AH2 + S-adenosyl-L-methionine = (8S)-3',8-cyclo-7,8-dihydroguanosine 5'-triphosphate + 5'-deoxyadenosine + L-methionine + A + H(+). It participates in cofactor biosynthesis; molybdopterin biosynthesis. Functionally, catalyzes the cyclization of GTP to (8S)-3',8-cyclo-7,8-dihydroguanosine 5'-triphosphate. The sequence is that of GTP 3',8-cyclase from Bacillus anthracis (strain CDC 684 / NRRL 3495).